The following is a 279-amino-acid chain: Undecaprenyl-diphosphatase (279 aa).

Helical transmembrane passes span 2–22 (LFIE…TEWL), 44–64 (AFME…VIVI), 85–105 (WQLW…AVPL), 113–133 (FNHM…FLWI), 163–183 (VLSI…AIIL), 188–208 (TVAA…YSGL), 225–245 (LLVL…VIKL), and 255–275 (FTVF…YSVF).

The protein belongs to the UppP family.

It localises to the cell membrane. It carries out the reaction di-trans,octa-cis-undecaprenyl diphosphate + H2O = di-trans,octa-cis-undecaprenyl phosphate + phosphate + H(+). Catalyzes the dephosphorylation of undecaprenyl diphosphate (UPP). Confers resistance to bacitracin. This is Undecaprenyl-diphosphatase from Streptococcus equi subsp. equi (strain 4047).